The sequence spans 58 residues: Weak neurotoxin D2B (58 aa).

Cystine bridges form between Cys-3–Cys-24, Cys-17–Cys-41, and Cys-43–Cys-54.

In terms of tissue distribution, expressed by the venom gland.

It localises to the secreted. In terms of biological role, binds to muscle nicotinic acetylcholine receptor (nAChR) and inhibit acetylcholine from binding to the receptor, thereby impairing neuromuscular transmission. This chain is Weak neurotoxin D2B, found in Micrurus pyrrhocryptus (Coral snake).